The following is a 340-amino-acid chain: Lipopolysaccharide heptosyltransferase 3 (340 aa).

It belongs to the glycosyltransferase 9 family.

It carries out the reaction an L-alpha-D-Hep-(1-&gt;3)-4-O-phospho-L-alpha-D-Hep-(1-&gt;5)-[alpha-Kdo-(2-&gt;4)]-alpha-Kdo-(2-&gt;6)-lipid A + ADP-L-glycero-beta-D-manno-heptose = an L-alpha-D-Hep-(1-&gt;7)-L-alpha-D-Hep-(1-&gt;3)-4-O-phospho-L-alpha-D-Hep-(1-&gt;5)-[alpha-Kdo-(2-&gt;4)]-alpha-Kdo-(2-&gt;6)-lipid A + ADP + H(+). The enzyme catalyses L-alpha-D-Hep-(1-&gt;3)-4-O-phospho-L-alpha-D-Hep-(1-&gt;5)-[alpha-Kdo-(2-&gt;4)]-alpha-Kdo-(2-&gt;6)-lipid A (E. coli) + ADP-L-glycero-beta-D-manno-heptose = L-alpha-D-Hep-(1-&gt;7)-L-alpha-D-Hep-(1-&gt;3)-4-O-phospho-L-alpha-D-Hep-(1-&gt;5)-[alpha-Kdo-(2-&gt;4)]-alpha-Kdo-(2-&gt;6)-lipid A (E. coli) + ADP + H(+). It participates in bacterial outer membrane biogenesis; LPS core biosynthesis. Glycosyltransferase involved in the biosynthesis of the core oligosaccharide region of lipopolysaccharide (LPS). Catalyzes the addition of the third heptose unit (HepIII) to the second heptose unit (HepII) of the phospho-Hep2-Kdo2-lipid A module. The transfer of HepIII seems to be a prerequisite to the phosphorylation of the second heptose unit. The chain is Lipopolysaccharide heptosyltransferase 3 from Escherichia coli.